A 380-amino-acid polypeptide reads, in one-letter code: Cytochrome b (380 aa).

The next 4 membrane-spanning stretches (helical) occupy residues 34–54, 78–99, 114–134, and 179–199; these read FGSL…LLAM, WLIR…YLHI, WNVG…GYVL, and FFAL…VHLT. Heme b contacts are provided by histidine 84 and histidine 98. Residues histidine 183 and histidine 197 each contribute to the heme b site. Histidine 202 contributes to the a ubiquinone binding site. The next 4 membrane-spanning stretches (helical) occupy residues 227 to 247, 289 to 309, 321 to 341, and 348 to 368; these read IKDI…ALFS, LGGV…PLLH, LSQI…WIGS, and FIII…VLFP.

The protein belongs to the cytochrome b family. As to quaternary structure, the cytochrome bc1 complex contains 11 subunits: 3 respiratory subunits (MT-CYB, CYC1 and UQCRFS1), 2 core proteins (UQCRC1 and UQCRC2) and 6 low-molecular weight proteins (UQCRH/QCR6, UQCRB/QCR7, UQCRQ/QCR8, UQCR10/QCR9, UQCR11/QCR10 and a cleavage product of UQCRFS1). This cytochrome bc1 complex then forms a dimer. The cofactor is heme b.

It localises to the mitochondrion inner membrane. Component of the ubiquinol-cytochrome c reductase complex (complex III or cytochrome b-c1 complex) that is part of the mitochondrial respiratory chain. The b-c1 complex mediates electron transfer from ubiquinol to cytochrome c. Contributes to the generation of a proton gradient across the mitochondrial membrane that is then used for ATP synthesis. In Vireo olivaceus (Red-eyed vireo), this protein is Cytochrome b (MT-CYB).